Reading from the N-terminus, the 388-residue chain is GTPase Obg (388 aa).

In terms of domain architecture, Obg spans 4 to 162 (SNFVDYVKIY…MTVILELKLL (159 aa)). The interval 18 to 45 (KGGRGSTHMRREKYTPNGGPDGGDGGRG) is disordered. Gly residues predominate over residues 36 to 45 (GPDGGDGGRG). In terms of domain architecture, OBG-type G spans 163–329 (ADVGLVGFPN…LKDILWTELN (167 aa)). Residues 169–176 (GFPNAGKS), 194–198 (FTTLE), 216–219 (DIPG), 283–286 (TKSD), and 310–312 (SSV) contribute to the GTP site. Residues S176 and T196 each coordinate Mg(2+). Positions 352 to 388 (LKDMGEDEELDYEYEDDGDGDEDDLDYEYEEEDWEDK) are disordered. Residues 356 to 388 (GEDEELDYEYEDDGDGDEDDLDYEYEEEDWEDK) show a composition bias toward acidic residues.

This sequence belongs to the TRAFAC class OBG-HflX-like GTPase superfamily. OBG GTPase family. In terms of assembly, monomer. Mg(2+) is required as a cofactor.

The protein localises to the cytoplasm. In terms of biological role, an essential GTPase which binds GTP, GDP and possibly (p)ppGpp with moderate affinity, with high nucleotide exchange rates and a fairly low GTP hydrolysis rate. Plays a role in control of the cell cycle, stress response, ribosome biogenesis and in those bacteria that undergo differentiation, in morphogenesis control. This chain is GTPase Obg, found in Bacteroides fragilis (strain ATCC 25285 / DSM 2151 / CCUG 4856 / JCM 11019 / LMG 10263 / NCTC 9343 / Onslow / VPI 2553 / EN-2).